Consider the following 153-residue polypeptide: Ribosome maturation factor RimP (153 aa).

The protein belongs to the RimP family.

The protein resides in the cytoplasm. Functionally, required for maturation of 30S ribosomal subunits. The polypeptide is Ribosome maturation factor RimP (Pelotomaculum thermopropionicum (strain DSM 13744 / JCM 10971 / SI)).